The chain runs to 542 residues: Membrane protein insertase YidC (542 aa).

5 helical membrane passes run 7–27 (LLVMGLLLVSFLIFTQWQQDF), 338–358 (FALLTFIQSIVTNWGLAIIGV), 417–437 (MGGCLPILIQMPIFIALYWTF), 455–475 (LSAQDPYYILPLLMGASMFLL), and 494–514 (FMPVMFTVFFLWFPSGLVLYW).

The protein belongs to the OXA1/ALB3/YidC family. Type 1 subfamily. Interacts with the Sec translocase complex via SecD. Specifically interacts with transmembrane segments of nascent integral membrane proteins during membrane integration.

It localises to the cell inner membrane. In terms of biological role, required for the insertion and/or proper folding and/or complex formation of integral membrane proteins into the membrane. Involved in integration of membrane proteins that insert both dependently and independently of the Sec translocase complex, as well as at least some lipoproteins. Aids folding of multispanning membrane proteins. This is Membrane protein insertase YidC from Actinobacillus pleuropneumoniae serotype 7 (strain AP76).